The sequence spans 886 residues: Alanine--tRNA ligase (886 aa).

Zn(2+) is bound by residues His-564, His-568, Cys-666, and His-670.

This sequence belongs to the class-II aminoacyl-tRNA synthetase family. Requires Zn(2+) as cofactor.

The protein resides in the cytoplasm. It catalyses the reaction tRNA(Ala) + L-alanine + ATP = L-alanyl-tRNA(Ala) + AMP + diphosphate. In terms of biological role, catalyzes the attachment of alanine to tRNA(Ala) in a two-step reaction: alanine is first activated by ATP to form Ala-AMP and then transferred to the acceptor end of tRNA(Ala). Also edits incorrectly charged Ser-tRNA(Ala) and Gly-tRNA(Ala) via its editing domain. The sequence is that of Alanine--tRNA ligase from Prochlorococcus marinus (strain MIT 9301).